The chain runs to 621 residues: MTLDLAHYPLLALADTPEQLRELPQDKLKQVAKELRQYLLTSVSQSSGHFASGLGTVELTVALHYVYNTPFDRLIWDVGHQAYPHKILTGRRDRMPTIRQKNGLHPFPWPNESEYDTFAVGHSSTSISAAVGMAVAAEKEALGRKVVAVIGDGAMTAGMAFEALNHGGDIDKDMLVILNDNEMSISENVGALNSHLARLLTGNFFNSIRDGGKKLLSSVPPIKEFASRAEEHIKGMVVPGTIFEELGFNYIGPIDGHDVNGVVDTLKNMRNIKGAQILHVVTKKGKGYELAEKDPIKFHAVPKFNPSADGLPKAAPSDPTFSNIFGRWLCDMAQQDPNLMAVTPAMREGSGMVEFSQKFPAQYFDVAIAEQHAVTFAAGLAKEGQNAVVAIYSTFLQRAYDQLIHDVALQNLPVLFAIDRAGLVGADGPTHQGAFDIPFLRCIPNMVIMTPADENECRQMLYTGHKLNKPAAVRYPRGSGTGVKPDNTMQALEIGKSRTIRQGEKVAILNFGVLLPYAEKAAEVLNATVIDMRFVKPLDTEAVANVAKNHELLITLEDGATTGGAGGAVAEYLLSTVHTSRLLQIGLPDEFIMQGTQTEMYAEIGMDDAGIIAKAHTFLAQ.

Residues His80 and 121 to 123 contribute to the thiamine diphosphate site; that span reads GHS. Asp152 serves as a coordination point for Mg(2+). Thiamine diphosphate is bound by residues 153 to 154, Asn181, Tyr288, and Glu370; that span reads GA. Asn181 is a binding site for Mg(2+).

It belongs to the transketolase family. DXPS subfamily. Homodimer. The cofactor is Mg(2+). Thiamine diphosphate serves as cofactor.

The catalysed reaction is D-glyceraldehyde 3-phosphate + pyruvate + H(+) = 1-deoxy-D-xylulose 5-phosphate + CO2. It participates in metabolic intermediate biosynthesis; 1-deoxy-D-xylulose 5-phosphate biosynthesis; 1-deoxy-D-xylulose 5-phosphate from D-glyceraldehyde 3-phosphate and pyruvate: step 1/1. Functionally, catalyzes the acyloin condensation reaction between C atoms 2 and 3 of pyruvate and glyceraldehyde 3-phosphate to yield 1-deoxy-D-xylulose-5-phosphate (DXP). This Pseudoalteromonas atlantica (strain T6c / ATCC BAA-1087) protein is 1-deoxy-D-xylulose-5-phosphate synthase.